The chain runs to 155 residues: MTIYAFYIYSRKCECVFAHRWKPSDRNSMETLVSQLEQNSIEDDMEKLIFGVVFSLRNMVKKITADQDQFMSYTTSKYKLHFYETPTNLRLIFITNPKIDSLTHVLQQIYTTLYVEFVVKHPLYTHVPPSAEEGGINCEIFRITLDRFVRTLSCF.

Belongs to the TRAPP small subunits family. BET5 subfamily. In terms of assembly, part of the multisubunit TRAPP (transport protein particle) complex composed of bet3, bet5, trs20, trs23, trs31, trs33, trs65, trs85, trs120 and trs130.

The protein localises to the golgi apparatus. It localises to the cis-Golgi network. It is found in the endoplasmic reticulum. Its function is as follows. May play a role in vesicular transport from endoplasmic reticulum to Golgi. The chain is Transport protein particle subunit bet5 (bet5) from Schizosaccharomyces pombe (strain 972 / ATCC 24843) (Fission yeast).